The chain runs to 372 residues: NAD(P)H-quinone oxidoreductase subunit 1 (372 aa).

Transmembrane regions (helical) follow at residues 27–47 (IIWL…GVLV), 97–117 (ILFT…WLIV), 128–148 (VGIG…GLLM), 176–196 (LALS…IDIV), 204–224 (ILSW…ICAL), 266–286 (ILSA…PIPV), 308–328 (SIGI…AILL), and 347–367 (FLLP…LAFP).

The protein belongs to the complex I subunit 1 family. NDH-1 is composed of at least 11 different subunits.

It is found in the cellular thylakoid membrane. The enzyme catalyses a plastoquinone + NADH + (n+1) H(+)(in) = a plastoquinol + NAD(+) + n H(+)(out). The catalysed reaction is a plastoquinone + NADPH + (n+1) H(+)(in) = a plastoquinol + NADP(+) + n H(+)(out). Its function is as follows. NDH-1 shuttles electrons from an unknown electron donor, via FMN and iron-sulfur (Fe-S) centers, to quinones in the respiratory and/or the photosynthetic chain. The immediate electron acceptor for the enzyme in this species is believed to be plastoquinone. Couples the redox reaction to proton translocation, and thus conserves the redox energy in a proton gradient. This is NAD(P)H-quinone oxidoreductase subunit 1 from Prochlorococcus marinus (strain MIT 9301).